Consider the following 683-residue polypeptide: Amino acid transporter heavy chain SLC3A1 (683 aa).

A compositionally biased stretch (basic and acidic residues) spans 1–10; the sequence is MNEDKDKRDS. The tract at residues 1–50 is disordered; the sequence is MNEDKDKRDSIQMSMKGCRTNNGFVQNEDIQEQDPDSRDTPQSNAVSIPA. Topologically, residues 1-86 are cytoplasmic; the sequence is MNEDKDKRDS…ARYRVPREIL (86 aa). Serine 10 carries the post-translational modification Phosphoserine. Residues 87–107 form a helical; Signal-anchor for type II membrane protein membrane-spanning segment; sequence FWLTVVSVFLLIGATIAIIII. The Extracellular segment spans residues 108–683; it reads SPKCLDWWQA…SVLDLLYSSC (576 aa). Asparagine 211 serves as a coordination point for Ca(2+). N-linked (GlcNAc...) asparagine glycans are attached at residues asparagine 211, asparagine 238, and asparagine 258. Residues cysteine 239 and cysteine 270 are joined by a disulfide bond. Aspartate 281, phenylalanine 315, leucine 316, and glutamate 318 together coordinate Ca(2+). The N-linked (GlcNAc...) asparagine glycan is linked to asparagine 329. The residue at position 383 (serine 383) is a Phosphoserine. N-linked (GlcNAc...) asparagine glycosylation is found at asparagine 510, asparagine 520, and asparagine 574. 2 cysteine pairs are disulfide-bonded: cysteine 568-cysteine 664 and cysteine 671-cysteine 683.

In terms of assembly, disulfide-linked heterodimer composed of the catalytic light subunit SLC7A9 and the heavy subunit SLC3A1. The heterodimer is the minimal functional unit. Assembles in non-covalently linked heterotetramers (dimers of heterodimers) and higher order oligomers; the oligomerization is mediated by SLC3A1 likely to prevent degradation in the endoplasmic reticulum and facilitate heteromer trafficking to the plasma membrane. Disulfide-linked heterodimer composed of the catalytic light subunit SLC7A13 and the heavy subunit SLC3A1. As to expression, predominantly expressed in kidney and intestine. In kidney localized to the apical membrane of the proximal tubules.

It localises to the cell membrane. The protein resides in the apical cell membrane. Acts as a chaperone that facilitates biogenesis and trafficking of functional transporter heteromers to the plasma membrane. Associates with SLC7A9 to form a functional transporter complex that mediates the electrogenic exchange between cationic amino acids and neutral amino acids, with a stoichiometry of 1:1. SLC7A9-SLC3A1 transporter has system b(0,+)-like activity with high affinity for extracellular cationic amino acids and L-cystine and lower affinity for intracellular neutral amino acids. Substrate exchange is driven by high concentration of intracellular neutral amino acids and the intracellular reduction of L-cystine to L-cysteine. SLC7A9-SLC3A1 acts as a major transporter for reabsorption of L-cystine and dibasic amino acids across the brush border membrane in early proximal tubules. Associates with SLC7A13 to form a functional complex that transports anionic and neutral amino acids via exchange or facilitated diffusion. SLC7A13-SLC3A1 may act as a major transporter for L-cystine in late proximal tubules, ensuring its reabsorption from the luminal fluid in exchange for cytosolic L-glutamate or L-aspartate. The polypeptide is Amino acid transporter heavy chain SLC3A1 (Slc3a1) (Rattus norvegicus (Rat)).